A 102-amino-acid polypeptide reads, in one-letter code: Large ribosomal subunit protein bL21 (102 aa).

Belongs to the bacterial ribosomal protein bL21 family. As to quaternary structure, part of the 50S ribosomal subunit. Contacts protein L20.

Its function is as follows. This protein binds to 23S rRNA in the presence of protein L20. The polypeptide is Large ribosomal subunit protein bL21 (Neisseria meningitidis serogroup A / serotype 4A (strain DSM 15465 / Z2491)).